The chain runs to 73 residues: Large ribosomal subunit protein bL31 (73 aa).

The Zn(2+) site is built by C16, C18, C37, and C40.

Belongs to the bacterial ribosomal protein bL31 family. Type A subfamily. Part of the 50S ribosomal subunit. Zn(2+) serves as cofactor.

Binds the 23S rRNA. This is Large ribosomal subunit protein bL31 from Hamiltonella defensa subsp. Acyrthosiphon pisum (strain 5AT).